The chain runs to 470 residues: Chromosomal replication initiator protein DnaA (470 aa).

The domain I, interacts with DnaA modulators stretch occupies residues 1 to 68 (MENFWSLCLG…SALAEEVLST (68 aa)). The interval 68 to 133 (TPVQIELALY…KKPKTLTETS (66 aa)) is domain II. The domain III, AAA+ region stretch occupies residues 134–350 (GLNPAFRFDN…GALNRIIAMA (217 aa)). 4 residues coordinate ATP: Gly-178, Gly-180, Lys-181, and Thr-182. The interval 351-470 (NFTGHAIDVS…IAVLIQVIRD (120 aa)) is domain IV, binds dsDNA.

The protein belongs to the DnaA family. As to quaternary structure, oligomerizes as a right-handed, spiral filament on DNA at oriC.

It is found in the cytoplasm. In terms of biological role, plays an essential role in the initiation and regulation of chromosomal replication. ATP-DnaA binds to the origin of replication (oriC) to initiate formation of the DNA replication initiation complex once per cell cycle. Binds the DnaA box (a 9 base pair repeat at the origin) and separates the double-stranded (ds)DNA. Forms a right-handed helical filament on oriC DNA; dsDNA binds to the exterior of the filament while single-stranded (ss)DNA is stabiized in the filament's interior. The ATP-DnaA-oriC complex binds and stabilizes one strand of the AT-rich DNA unwinding element (DUE), permitting loading of DNA polymerase. After initiation quickly degrades to an ADP-DnaA complex that is not apt for DNA replication. Binds acidic phospholipids. The polypeptide is Chromosomal replication initiator protein DnaA (Methylobacillus flagellatus (strain ATCC 51484 / DSM 6875 / VKM B-1610 / KT)).